The chain runs to 439 residues: GTPase Der (439 aa).

EngA-type G domains follow at residues 2 to 168 and 181 to 357; these read ATVL…EEKG and IKIA…SSYT. Residues 8–15, 55–59, 118–121, 187–194, 234–238, and 300–303 contribute to the GTP site; these read GKPNVGKS, DTCGV, NKTE, GRPNVGKS, DTAGL, and NKWD. Positions 358 to 439 constitute a KH-like domain; it reads TKVPSSALNS…PIFLKFKKSR (82 aa).

Belongs to the TRAFAC class TrmE-Era-EngA-EngB-Septin-like GTPase superfamily. EngA (Der) GTPase family. Associates with the 50S ribosomal subunit.

Functionally, GTPase that plays an essential role in the late steps of ribosome biogenesis. This chain is GTPase Der, found in Thermotoga neapolitana (strain ATCC 49049 / DSM 4359 / NBRC 107923 / NS-E).